The following is a 274-amino-acid chain: Large ribosomal subunit protein uL2cz/uL2cy (274 aa).

Residues 224–253 (NPIDHPHGGGEGRAPIGRKKPTTPWGYPAL) form a disordered region.

The protein belongs to the universal ribosomal protein uL2 family. In terms of assembly, part of the 50S ribosomal subunit.

Its subcellular location is the plastid. This Epifagus virginiana (Beechdrops) protein is Large ribosomal subunit protein uL2cz/uL2cy (rpl2-A).